The following is a 450-amino-acid chain: Alpha-2B adrenergic receptor (450 aa).

The Extracellular segment spans residues 1 to 12; the sequence is MDHQDPYSVQAT. A helical transmembrane segment spans residues 13–38; sequence AAIAAAITFLILFTIFGNALVILAVL. The Cytoplasmic portion of the chain corresponds to 39–48; sequence TSRSLRAPQN. The chain crosses the membrane as a helical span at residues 49 to 69; it reads LFLVSLAAADILVATLIIPFS. Residues 70–86 are Extracellular-facing; that stretch reads LANELLGYWYFRRTWCE. C85 and C164 form a disulfide bridge. The helical transmembrane segment at 87–107 threads the bilayer; that stretch reads VYLALDVLFCTSSIVHLCAIS. Over 108–128 the chain is Cytoplasmic; it reads LDRYWAVSRALEYNSKRTPRR. Residues 129–149 form a helical membrane-spanning segment; it reads IKCIILTVWLIAAVISLPPLI. Residues 150–172 lie on the Extracellular side of the membrane; it reads YKGDQGPQPRGRPQCKLNQEAWY. A helical membrane pass occupies residues 173–193; sequence ILASSIGSFFAPCLIMILVYL. The Cytoplasmic segment spans residues 194-368; the sequence is RIYLIAKRSN…RRAQLTREKR (175 aa). 2 disordered regions span residues 204 to 229 and 241 to 329; these read RRGP…GGAL and ASAR…PLQQ. Residues 246 to 256 show a composition bias toward basic and acidic residues; that stretch reads VNGHSKSTGEK. Acidic residues predominate over residues 293-311; the sequence is PEDEAEEEEEEEEEEEECE. The segment covering 312–326 has biased composition (low complexity); the sequence is PQAVPVSPASACSPP. The helical transmembrane segment at 369–389 threads the bilayer; sequence FTFVLAVVIGVFVLCWFPFFF. Topologically, residues 390–405 are extracellular; sequence SYSLGAICPKHCKVPH. A helical membrane pass occupies residues 406 to 426; the sequence is GLFQFFFWIGYCNSSLNPVIY. The Cytoplasmic portion of the chain corresponds to 427–450; the sequence is TIFNQDFRRAFRRILCRPWTQTAW. C442 is lipidated: S-palmitoyl cysteine.

Belongs to the G-protein coupled receptor 1 family. Adrenergic receptor subfamily. ADRA2B sub-subfamily. As to quaternary structure, interacts with RAB26. Interacts with PPP1R9B. Interacts with GGA1, GGA2 and GGA3.

The protein resides in the cell membrane. Functionally, alpha-2 adrenergic receptors mediate the catecholamine-induced inhibition of adenylate cyclase through the action of G proteins. The rank order of potency for agonists of this receptor is clonidine &gt; norepinephrine &gt; epinephrine = oxymetazoline &gt; dopamine &gt; p-tyramine = phenylephrine &gt; serotonin &gt; p-synephrine / p-octopamine. For antagonists, the rank order is yohimbine &gt; chlorpromazine &gt; phentolamine &gt; mianserine &gt; spiperone &gt; prazosin &gt; alprenolol &gt; propanolol &gt; pindolol. This chain is Alpha-2B adrenergic receptor (ADRA2B), found in Homo sapiens (Human).